The chain runs to 211 residues: Thymidylate kinase (211 aa).

Residue glycine 10 to threonine 17 participates in ATP binding.

It belongs to the thymidylate kinase family.

The catalysed reaction is dTMP + ATP = dTDP + ADP. In terms of biological role, phosphorylation of dTMP to form dTDP in both de novo and salvage pathways of dTTP synthesis. In Trichormus variabilis (strain ATCC 29413 / PCC 7937) (Anabaena variabilis), this protein is Thymidylate kinase.